We begin with the raw amino-acid sequence, 268 residues long: MPRFRMTVEYDGGPYVGWQRQENGPSVQGAIEAAVLSLTGETVSIRGAGRTDSGVHAMGQVIHADLSKAWSPYQLQNALNAHLRLAGERVSILDVEAVAEFFDARFSALRRHYLYRIVSRRAPLALEAGKAWWVPKVLDHEVMHAAAQRLVGRHDFSTFRAAHCQANSPVRTLDRLDVTRSGELIEIRATAQSFLHNQIRSFAGTLKLAGEGKWTPDDVEAALEARDRKACGPVAPPDGLYFLQVDYPDVIPDRRRPVTDADDGDNLS.

The active-site Nucleophile is the Asp52. Tyr113 contacts substrate.

It belongs to the tRNA pseudouridine synthase TruA family. Homodimer.

The enzyme catalyses uridine(38/39/40) in tRNA = pseudouridine(38/39/40) in tRNA. Formation of pseudouridine at positions 38, 39 and 40 in the anticodon stem and loop of transfer RNAs. The polypeptide is tRNA pseudouridine synthase A (Rhizobium leguminosarum bv. trifolii (strain WSM2304)).